Consider the following 169-residue polypeptide: Alpha-S2-casein-like B (169 aa).

The first 15 residues, 1 to 15, serve as a signal peptide directing secretion; the sequence is MKFIILTCLLAVALA.

The protein belongs to the alpha-casein family. In terms of tissue distribution, mammary gland specific. Secreted in milk.

The protein resides in the secreted. Important role in the capacity of milk to transport calcium phosphate. The sequence is that of Alpha-S2-casein-like B (Csn1s2b) from Rattus norvegicus (Rat).